The following is a 98-amino-acid chain: Co-chaperonin GroES (98 aa).

The tract at residues 32–56 (NAKEKPQQGEVLAVGPGRRDDEGKR) is disordered.

It belongs to the GroES chaperonin family. As to quaternary structure, heptamer of 7 subunits arranged in a ring. Interacts with the chaperonin GroEL.

It is found in the cytoplasm. Together with the chaperonin GroEL, plays an essential role in assisting protein folding. The GroEL-GroES system forms a nano-cage that allows encapsulation of the non-native substrate proteins and provides a physical environment optimized to promote and accelerate protein folding. GroES binds to the apical surface of the GroEL ring, thereby capping the opening of the GroEL channel. In Bifidobacterium animalis subsp. lactis (strain AD011), this protein is Co-chaperonin GroES.